Reading from the N-terminus, the 777-residue chain is Proton-coupled zinc antiporter SLC30A5 (777 aa).

Residues 1–28 (MEEKYSSNVMSSGRLGPVDAPESRLTRY) lie on the Cytoplasmic side of the membrane. Residues 29 to 49 (IVLLCFTKFLKALGIFESYDL) traverse the membrane as a helical segment. Residues 50-52 (LKV) are Lumenal-facing. Residues 53-73 (VHIVQFIFILKLGSTCFMVLF) traverse the membrane as a helical segment. Topologically, residues 74–94 (QKPFSSGKSITKRQWVSIVKH) are cytoplasmic. The chain crosses the membrane as a helical span at residues 95–115 (AFVSCIISLLWFFGLTLCGPL). Residues 116–117 (RT) lie on the Lumenal side of the membrane. The helical transmembrane segment at 118-138 (LLLFEHSDIVVISLLTVLFTG) threads the bilayer. Residues 139–148 (SGGGPSKTRG) are Cytoplasmic-facing. Residues 149 to 169 (AAFFIIAVICLLLFDNDDLMA) form a helical membrane-spanning segment. Topologically, residues 170 to 189 (KIAEHPEGHHDSALTHFLYR) are lumenal. The helical transmembrane segment at 190–210 (AFFLLGVADHKGGVLLLVLAL) threads the bilayer. At 211–234 (CFNVGFHTASRKLSLDIGGAKRLQ) the chain is on the cytoplasmic side. A helical membrane pass occupies residues 235–255 (ALSHLVSVIILSPWVIILSAT). The Lumenal portion of the chain corresponds to 256-263 (TESKIESW). Residues 264 to 284 (SALIMPFMTVIFSVMIMDFYV) form a helical membrane-spanning segment. At 285 to 299 (ESVCSVKMEPSKCAR) the chain is on the cytoplasmic side. Residues 300–320 (YGSFLIFASALLLGNFWTHPI) form a helical membrane-spanning segment. The Lumenal portion of the chain corresponds to 321-338 (TDQLRAMNKPAHQLHTEH). A helical transmembrane segment spans residues 339 to 359 (VLSGGVVVSAIFFILSAQILA). Residues 360-414 (SSSRKGQRGTLVGYSPEGTPLYNFMGDALHNTSPSMPRFLKDSLKQILEEYDSRQ) are Cytoplasmic-facing. A helical transmembrane segment spans residues 415-435 (IFYFLCLNLAFTFVEIFYGVW). At 436-444 (TNSLGLLSD) the chain is on the lumenal side. The chain crosses the membrane as a helical span at residues 445–465 (GFHMLFDCSALVMGLIAALMT). 2 residues coordinate Zn(2+): histidine 447 and aspartate 451. Residues 466 to 484 (RWKATRIFSYGYGRVEILS) lie on the Cytoplasmic side of the membrane. The helical transmembrane segment at 485-505 (GFINGLFLVVIAFFVFIEAVA) threads the bilayer. Residues 506–516 (RIYDPPDINTD) lie on the Lumenal side of the membrane. Residues 517-537 (MLTPVSVGGLIVNLVGICAFS) traverse the membrane as a helical segment. A his-rich loop; required for zinc transport region spans residues 538 to 586 (HAHSHGAARGGCPSHDHGHSHHGHGHSHGHNHGHSHSDHGHNHGHTHNH). Topologically, residues 538–604 (HAHSHGAARG…VGMNANMRGV (67 aa)) are cytoplasmic. The segment at 547 to 593 (GGCPSHDHGHSHHGHGHSHGHNHGHSHSDHGHNHGHTHNHGHSHGSA) is disordered. Basic residues-rich tracts occupy residues 555-571 (GHSH…NHGH) and 579-589 (NHGHTHNHGHS). Residues 605–625 (FSHVLADTLGSVGVIVSTILI) traverse the membrane as a helical segment. Residues histidine 607 and aspartate 611 each contribute to the Zn(2+) site. The Lumenal portion of the chain corresponds to 626–629 (RQFG). Residues 630–650 (WLIADPLCSLFIAVLIFGSVL) form a helical membrane-spanning segment. Residues 651-777 (PLLKDACQVI…KYYKDGTYIM (127 aa)) are Cytoplasmic-facing.

Belongs to the cation diffusion facilitator (CDF) transporter (TC 2.A.4) family. SLC30A subfamily. In terms of assembly, heterodimer with SLC30A6/ZNT6; form a functional zinc ion transmembrane transporter.

It is found in the golgi apparatus. The protein localises to the golgi stack membrane. The protein resides in the cytoplasmic vesicle. Its subcellular location is the COPII-coated vesicle membrane. It localises to the secretory vesicle membrane. It is found in the trans-Golgi network membrane. The catalysed reaction is Zn(2+)(in) + 2 H(+)(out) = Zn(2+)(out) + 2 H(+)(in). Together with SLC30A6 forms a functional proton-coupled zinc ion antiporter mediating zinc entry into the lumen of organelles along the secretory pathway. By contributing to zinc ion homeostasis within the early secretory pathway, regulates the activation and folding of enzymes like alkaline phosphatases and enzymes involved in phosphatidylinositol glycan anchor biosynthesis. This Xenopus tropicalis (Western clawed frog) protein is Proton-coupled zinc antiporter SLC30A5 (slc30a5).